Reading from the N-terminus, the 453-residue chain is Tetrahydroanabasine acetyltransferase (453 aa).

Residues His163 and Asp388 each act as proton acceptor in the active site.

It belongs to the plant acyltransferase family. In terms of assembly, monomer.

The catalysed reaction is tetrahydroanabasine + acetyl-CoA = ammodendrine + CoA. The protein operates within alkaloid biosynthesis. Functionally, tetrahydroanabasine acetyltransferase involved in the accumulation of quinolizidine type antinutritional alkaloids (QAs). QAs impart a bitter taste to plants, acting as repellents and toxicants for herbivores and predators, and possess a variety of pharmacological effects, including sedative, anticonvulsant, anti-inflammatory, antiviral, antitumor, antipyretic, anti-hepatitis B, antifibrotic, antiallergic, antidiarrheal, analgesic and antimicrobial activities. Mediates the conversion of tetrahydroanabasine into ammodendrine. The protein is Tetrahydroanabasine acetyltransferase of Lupinus angustifolius (Narrow-leaved blue lupine).